The primary structure comprises 311 residues: tRNA dimethylallyltransferase (311 aa).

9–16 serves as a coordination point for ATP; the sequence is GPTAVGKT. 11-16 is a binding site for substrate; the sequence is TAVGKT. Residues 34-37 form an interaction with substrate tRNA region; that stretch reads DSMQ.

Belongs to the IPP transferase family. Monomer. Mg(2+) is required as a cofactor.

The enzyme catalyses adenosine(37) in tRNA + dimethylallyl diphosphate = N(6)-dimethylallyladenosine(37) in tRNA + diphosphate. Its function is as follows. Catalyzes the transfer of a dimethylallyl group onto the adenine at position 37 in tRNAs that read codons beginning with uridine, leading to the formation of N6-(dimethylallyl)adenosine (i(6)A). The protein is tRNA dimethylallyltransferase of Clostridium botulinum (strain Hall / ATCC 3502 / NCTC 13319 / Type A).